We begin with the raw amino-acid sequence, 535 residues long: Dipeptide-binding protein (535 aa).

A signal peptide spans 1 to 28 (MRISLKKSGMLKLGLSLVAMTVAASVQA). Cys-34 and Cys-262 are disulfide-bonded. Residues 48 to 50 (TSG), 383 to 385 (RPY), and 433 to 436 (WTGD) contribute to the glycyl-L-leucine site. The cysteines at positions 450 and 463 are disulfide-linked.

It belongs to the bacterial solute-binding protein 5 family. In terms of assembly, the complex is composed of two ATP-binding proteins (DppD and DppF), two transmembrane proteins (DppB and DppC) and a solute-binding protein (DppA).

The protein resides in the periplasm. With respect to regulation, heme binding is inhibited by dipeptide. In terms of biological role, part of the ABC transporter DppABCDF involved in dipeptide transport. Binds dipeptides and accepts a wide range of side chains, including small neutral, bulky hydrophobic, and positively and negatively charged groups. Tripeptides are poor substrates. DppA alone controls the specificity of the Dpp transporter. In addition, plays a role in chemotaxis toward peptides via interaction with the chemotaxis protein Tap. Binds heme. When a foreign outer membrane heme receptor is expressed in E.coli, DppABCDF can also transport heme and its precursor, 5-aminolevulinic acid (ALA), from the periplasm into the cytoplasm. The protein is Dipeptide-binding protein of Escherichia coli (strain K12).